Reading from the N-terminus, the 78-residue chain is Conotoxin Cal6.3a (78 aa).

Residues 1–21 (MRFLHFLIVAVLLASFMESGA) form the signal peptide. Positions 22–26 (MPRNP) are excised as a propeptide. 3 cysteine pairs are disulfide-bonded: C38/C49, C41/C53, and C48/C56. Position 76 is a glutamine amide (Q76).

In terms of tissue distribution, expressed by the venom duct.

It is found in the secreted. In terms of biological role, probable neurotoxin with unknown target. Possibly targets ion channels. The polypeptide is Conotoxin Cal6.3a (Californiconus californicus (California cone)).